The chain runs to 382 residues: MTLAVLIVAAGKGTRAGGGLAKQWRPLAGRLVIDWTIEAFQRAGCGTIMVVRDPDNEHAIEALAPYPELLLADGGPSRSESVRNGLIALQEIGVERVLIHDAARPCVCPQVIQQVLDALDDTPAAAPGLAVTDALWTGADGHVTGTQDRSALFAAQTPQGFHFDAILAAHMRHDGTAADDVEVARQAGLAVRITPGDVNNIKITRPEDFSRAEHILRSTMDNIPDIRLGNGYDVHRFGPGDHVMLCGVQVPHERGLQGHSDADVGMHAVTDALYGAMAEGDIGRHFPPSDPQWKGAASDIFLRHAVELARSKGFTINNVDCTLVCEYPKVGPHAEAMRARMAEIMGMDMGRLSIKATTSERLGFTGRKEGIAALATATLVRA.

The interval 1-226 (MTLAVLIVAA…RSTMDNIPDI (226 aa)) is 2-C-methyl-D-erythritol 4-phosphate cytidylyltransferase. Positions 227 to 382 (RLGNGYDVHR…ALATATLVRA (156 aa)) are 2-C-methyl-D-erythritol 2,4-cyclodiphosphate synthase. A divalent metal cation is bound by residues Asp-233 and His-235. Residues 233-235 (DVH) and 259-260 (HS) contribute to the 4-CDP-2-C-methyl-D-erythritol 2-phosphate site. His-267 lines the a divalent metal cation pocket. 4-CDP-2-C-methyl-D-erythritol 2-phosphate-binding positions include 281–283 (DIG), 357–360 (TTSE), Phe-364, and Arg-367.

This sequence in the N-terminal section; belongs to the IspD/TarI cytidylyltransferase family. IspD subfamily. It in the C-terminal section; belongs to the IspF family. A divalent metal cation serves as cofactor.

It catalyses the reaction 2-C-methyl-D-erythritol 4-phosphate + CTP + H(+) = 4-CDP-2-C-methyl-D-erythritol + diphosphate. The enzyme catalyses 4-CDP-2-C-methyl-D-erythritol 2-phosphate = 2-C-methyl-D-erythritol 2,4-cyclic diphosphate + CMP. It functions in the pathway isoprenoid biosynthesis; isopentenyl diphosphate biosynthesis via DXP pathway; isopentenyl diphosphate from 1-deoxy-D-xylulose 5-phosphate: step 2/6. The protein operates within isoprenoid biosynthesis; isopentenyl diphosphate biosynthesis via DXP pathway; isopentenyl diphosphate from 1-deoxy-D-xylulose 5-phosphate: step 4/6. Its function is as follows. Bifunctional enzyme that catalyzes the formation of 4-diphosphocytidyl-2-C-methyl-D-erythritol from CTP and 2-C-methyl-D-erythritol 4-phosphate (MEP) (IspD), and catalyzes the conversion of 4-diphosphocytidyl-2-C-methyl-D-erythritol 2-phosphate (CDP-ME2P) to 2-C-methyl-D-erythritol 2,4-cyclodiphosphate (ME-CPP) with a corresponding release of cytidine 5-monophosphate (CMP) (IspF). The protein is Bifunctional enzyme IspD/IspF of Ruegeria sp. (strain TM1040) (Silicibacter sp.).